Consider the following 63-residue polypeptide: MLGQSIRRFTTSVVRRSHYEEGPGKNLPFSVENKWSLLAKMCLYFGSAFATPFLIVRHQLLKT.

The transit peptide at 1–16 (MLGQSIRRFTTSVVRR) directs the protein to the mitochondrion. The Mitochondrial matrix segment spans residues 17-33 (SHYEEGPGKNLPFSVEN). Residue lysine 25 is modified to N6-acetyllysine; alternate. Lysine 25 bears the N6-succinyllysine; alternate mark. Residues 34-60 (KWSLLAKMCLYFGSAFATPFLIVRHQL) traverse the membrane as a helical segment. The Mitochondrial intermembrane segment spans residues 61-63 (LKT).

The protein belongs to the cytochrome c oxidase VIIc family. Component of the cytochrome c oxidase (complex IV, CIV), a multisubunit enzyme composed of 14 subunits. The complex is composed of a catalytic core of 3 subunits MT-CO1, MT-CO2 and MT-CO3, encoded in the mitochondrial DNA, and 11 supernumerary subunits COX4I, COX5A, COX5B, COX6A, COX6B, COX6C, COX7A, COX7B, COX7C, COX8 and NDUFA4, which are encoded in the nuclear genome. The complex exists as a monomer or a dimer and forms supercomplexes (SCs) in the inner mitochondrial membrane with NADH-ubiquinone oxidoreductase (complex I, CI) and ubiquinol-cytochrome c oxidoreductase (cytochrome b-c1 complex, complex III, CIII), resulting in different assemblies (supercomplex SCI(1)III(2)IV(1) and megacomplex MCI(2)III(2)IV(2)). Interacts with RAB5IF.

Its subcellular location is the mitochondrion inner membrane. It functions in the pathway energy metabolism; oxidative phosphorylation. Component of the cytochrome c oxidase, the last enzyme in the mitochondrial electron transport chain which drives oxidative phosphorylation. The respiratory chain contains 3 multisubunit complexes succinate dehydrogenase (complex II, CII), ubiquinol-cytochrome c oxidoreductase (cytochrome b-c1 complex, complex III, CIII) and cytochrome c oxidase (complex IV, CIV), that cooperate to transfer electrons derived from NADH and succinate to molecular oxygen, creating an electrochemical gradient over the inner membrane that drives transmembrane transport and the ATP synthase. Cytochrome c oxidase is the component of the respiratory chain that catalyzes the reduction of oxygen to water. Electrons originating from reduced cytochrome c in the intermembrane space (IMS) are transferred via the dinuclear copper A center (CU(A)) of subunit 2 and heme A of subunit 1 to the active site in subunit 1, a binuclear center (BNC) formed by heme A3 and copper B (CU(B)). The BNC reduces molecular oxygen to 2 water molecules using 4 electrons from cytochrome c in the IMS and 4 protons from the mitochondrial matrix. The polypeptide is Cytochrome c oxidase subunit 7C, mitochondrial (COX7C) (Pongo pygmaeus (Bornean orangutan)).